A 237-amino-acid chain; its full sequence is Phosphoribosylaminoimidazole-succinocarboxamide synthase (237 aa).

It belongs to the SAICAR synthetase family.

It carries out the reaction 5-amino-1-(5-phospho-D-ribosyl)imidazole-4-carboxylate + L-aspartate + ATP = (2S)-2-[5-amino-1-(5-phospho-beta-D-ribosyl)imidazole-4-carboxamido]succinate + ADP + phosphate + 2 H(+). It participates in purine metabolism; IMP biosynthesis via de novo pathway; 5-amino-1-(5-phospho-D-ribosyl)imidazole-4-carboxamide from 5-amino-1-(5-phospho-D-ribosyl)imidazole-4-carboxylate: step 1/2. This is Phosphoribosylaminoimidazole-succinocarboxamide synthase from Photorhabdus laumondii subsp. laumondii (strain DSM 15139 / CIP 105565 / TT01) (Photorhabdus luminescens subsp. laumondii).